The sequence spans 261 residues: MTVVTMKQLLEAGVHFGHQTRRWDPKMAPYIFTQRNGIYIIDLQKTIKMLDDAYNYVKAVAQDGGVFLFVGTKKQAQDAVKEEATRAGQYYVNQRWLGGTLTNWTTIQSRVKRLKELKQMSEDGTFDVLPKKEVALLTKEMEKLERFLGGIEDMPRIPDVMFVVDPKKEKIAVHEANILGIPVVAMVDTNTDPDPIDVVIPANDDAIRAIRLISGAMADAIIEGKQGQDDSEDVEKEMADKAAAEDDEEESIEVVVEKSED.

Positions 223–261 (EGKQGQDDSEDVEKEMADKAAAEDDEEESIEVVVEKSED) are disordered.

It belongs to the universal ribosomal protein uS2 family.

The protein is Small ribosomal subunit protein uS2 of Lactobacillus johnsonii (strain CNCM I-12250 / La1 / NCC 533).